Consider the following 698-residue polypeptide: FHF complex subunit HOOK-interacting protein 2B (698 aa).

The protein belongs to the FHIP family.

The chain is FHF complex subunit HOOK-interacting protein 2B (fhip2b) from Xenopus tropicalis (Western clawed frog).